The sequence spans 843 residues: Translation initiation factor IF-2 (843 aa).

The segment at 198-219 is disordered; that stretch reads YKREEEEKKSKAKKAGGKGFKK. Over residues 207-219 the composition is skewed to basic residues; it reads SKAKKAGGKGFKK. A tr-type G domain is found at 345–512; it reads SRAPVVTIMG…AVLLQSEVLE (168 aa). The segment at 354 to 361 is G1; the sequence is GHVDHGKT. Residue 354–361 participates in GTP binding; it reads GHVDHGKT. The tract at residues 379–383 is G2; that stretch reads GITQH. Residues 400-403 are G3; it reads DTPG. GTP-binding positions include 400–404 and 454–457; these read DTPGH and NKID. Residues 454–457 form a G4 region; the sequence is NKID. The segment at 490-492 is G5; that stretch reads SAK.

This sequence belongs to the TRAFAC class translation factor GTPase superfamily. Classic translation factor GTPase family. IF-2 subfamily.

Its subcellular location is the cytoplasm. One of the essential components for the initiation of protein synthesis. Protects formylmethionyl-tRNA from spontaneous hydrolysis and promotes its binding to the 30S ribosomal subunits. Also involved in the hydrolysis of GTP during the formation of the 70S ribosomal complex. The protein is Translation initiation factor IF-2 of Francisella tularensis subsp. tularensis (strain WY96-3418).